Reading from the N-terminus, the 456-residue chain is Ribosomal protein uS12 methylthiotransferase RimO (456 aa).

Residues 11 to 126 (PKVGFVSLGC…VMQAVHTHLP (116 aa)) form the MTTase N-terminal domain. Cys20, Cys56, Cys85, Cys157, Cys161, and Cys164 together coordinate [4Fe-4S] cluster. One can recognise a Radical SAM core domain in the interval 143-384 (LTPKHYAYLK…MEVAEEVSAR (242 aa)). A TRAM domain is found at 387 to 456 (QRKVGQTLRV…DGHDLWGEVA (70 aa)).

This sequence belongs to the methylthiotransferase family. RimO subfamily. It depends on [4Fe-4S] cluster as a cofactor.

The protein resides in the cytoplasm. It carries out the reaction L-aspartate(89)-[ribosomal protein uS12]-hydrogen + (sulfur carrier)-SH + AH2 + 2 S-adenosyl-L-methionine = 3-methylsulfanyl-L-aspartate(89)-[ribosomal protein uS12]-hydrogen + (sulfur carrier)-H + 5'-deoxyadenosine + L-methionine + A + S-adenosyl-L-homocysteine + 2 H(+). Functionally, catalyzes the methylthiolation of an aspartic acid residue of ribosomal protein uS12. This chain is Ribosomal protein uS12 methylthiotransferase RimO, found in Cupriavidus metallidurans (strain ATCC 43123 / DSM 2839 / NBRC 102507 / CH34) (Ralstonia metallidurans).